Reading from the N-terminus, the 61-residue chain is MPYVHVELFEGRTVEQKAIIAKEITESISKHAGAPTSAIHVIFNDLPEGMLYQGGEMKKKK.

Pro-2 acts as the Proton acceptor; via imino nitrogen in catalysis.

This sequence belongs to the 4-oxalocrotonate tautomerase family.

The polypeptide is Probable tautomerase LL0574 (Lactococcus lactis subsp. lactis (strain IL1403) (Streptococcus lactis)).